The primary structure comprises 1083 residues: LIM and calponin homology domains-containing protein 1 (1083 aa).

Disordered regions lie at residues 1 to 22, 185 to 248, and 291 to 311; these read MASN…PPDT, SERS…VRKD, and REDY…ERPF. The Calponin-homology (CH) domain maps to 21-138; it reads DTACMEAQKW…TVYWLGKAAN (118 aa). The span at 229-248 shows a compositional bias: basic and acidic residues; the sequence is RGSDSESDLPHRRIPDVRKD. Residues 356–424 are a coiled coil; that stretch reads LARWKTRRRS…HVAYKNAKTR (69 aa). Low complexity predominate over residues 462–474; that stretch reads PSLLSSSEDPNPL. Disordered regions lie at residues 462-512, 625-661, 698-725, and 759-779; these read PSLL…LISP, QKDE…VPAV, KEAK…ENES, and SPAL…DPEE. 2 stretches are compositionally biased toward polar residues: residues 478–512 and 640–657; these read RQQS…LISP and SVEQ…TTQA. Over residues 716–725 the composition is skewed to basic and acidic residues; that stretch reads ESSKIKENES. A coiled-coil region spans residues 784–835; that stretch reads QEKWQQEQERLLQERYQKEQEKLKEEWEKAQKEVEEEERKYYEEERKIIEDT. Residues 987–1006 form a disordered region; that stretch reads KEETLNSSQSTSQCQSPNRS. The segment covering 991-1006 has biased composition (polar residues); the sequence is LNSSQSTSQCQSPNRS. One can recognise an LIM zinc-binding domain in the interval 1011-1077; that stretch reads KLCSTCGLPL…NDCYVKSRTA (67 aa).

It belongs to the LIMCH1 family.

The protein resides in the cytoplasm. Its subcellular location is the cytoskeleton. The protein localises to the stress fiber. In terms of biological role, actin stress fibers-associated protein that activates non-muscle myosin IIa. Through the activation of non-muscle myosin IIa, positively regulates actin stress fibers assembly and stabilizes focal adhesions. It therefore negatively regulates cell spreading and cell migration. The chain is LIM and calponin homology domains-containing protein 1 (limch1) from Xenopus laevis (African clawed frog).